The sequence spans 162 residues: uncharacterized protein (162 aa).

The interval 1–49 (MNSRTASARGWFSSRPPTSESDLEPATDGPASETTTLSPEATTFNDTRI) is disordered. Over residues 32 to 46 (SETTTLSPEATTFND) the composition is skewed to polar residues. The helical transmembrane segment at 62-82 (MLLSFGIITVIGLAVALVLYI) threads the bilayer.

The protein resides in the membrane. This is an uncharacterized protein from Homo sapiens (Human).